The primary structure comprises 222 residues: Germin-like protein subfamily 1 member 20 (222 aa).

Residues 1–22 form the signal peptide; sequence MRVSQSLVPFAIIALVLSFVNA. Residues Cys32 and Cys48 are joined by a disulfide bond. The Cupin type-1 domain maps to 62-213; the sequence is SGLNVPGNTN…AFQLDASVVK (152 aa). N-linked (GlcNAc...) asparagine glycosylation occurs at Asn77. Mn(2+)-binding residues include His110, His112, Glu117, and His159.

This sequence belongs to the germin family. As to quaternary structure, oligomer (believed to be a pentamer but probably hexamer). In terms of tissue distribution, expressed in stems and developing embryos.

The protein localises to the secreted. It is found in the extracellular space. The protein resides in the apoplast. Functionally, may play a role in plant defense. Probably has no oxalate oxidase activity even if the active site is conserved. This is Germin-like protein subfamily 1 member 20 (GLP5A) from Arabidopsis thaliana (Mouse-ear cress).